The sequence spans 400 residues: MRIEPIIQGVVARSAHPFGCEAAIKKQIAFVKKAPQISQGPKRVLILGASSGFGLAARIALTFGGAQADTIGVSFERGPSEKGTGSAGWYNNVFFKREAEKEGRIAINIVGDAFASETRTQVIEAIETYFEGEVDLVIYSLATGMRPIPNQPGEFWRSVIKPFGQTVTGASLDLEHDRWIDTTLESATEEEALHTIKVMGGEDWESWIDTLINAESIAQGCQTIAFSYVGPEITHPIYLDGTLGRAKIDLHQTSHSLNLKLANFDGAAYATVCKALVTKASVFIPALSPYLLALYRVMKDEKCHEGCIEQMQRLFATKLYGQDHISVDGERLVRMDDWELAPHIQNKVNQILEEMDANNFQVIGDYQGFKNEFLQLNGFGFDEVDYSQDIDLQTILKLTP.

NAD(+) contacts are provided by residues 48–53 (GASSGF), 75–76 (FE), 112–113 (DA), and 141–142 (LA). Y228 lines the substrate pocket. The active-site Proton donor is Y238. Residues K247 and 276–278 (LVT) each bind NAD(+).

This sequence belongs to the TER reductase family. Monomer.

It carries out the reaction a 2,3-saturated acyl-[ACP] + NAD(+) = a (2E)-enoyl-[ACP] + NADH + H(+). The protein operates within lipid metabolism; fatty acid biosynthesis. Functionally, involved in the final reduction of the elongation cycle of fatty acid synthesis (FAS II). Catalyzes the reduction of a carbon-carbon double bond in an enoyl moiety that is covalently linked to an acyl carrier protein (ACP). In Vibrio vulnificus (strain YJ016), this protein is Enoyl-[acyl-carrier-protein] reductase [NADH] 2.